The following is a 315-amino-acid chain: Kinetochore protein SPC25 homolog (315 aa).

An N-acetylmethionine modification is found at Met-1. The stretch at 57–91 (TAQSQVELMNLKADLREAEDELVKVLAVKTRKEAR) forms a coiled coil. The segment at 261–315 (APAISFSTDTNMSTPENKRSKVQVNRRQKRGSESPLLAPVSTSATRRSSRFKGKK) is disordered. The span at 266–275 (FSTDTNMSTP) shows a compositional bias: polar residues. Basic residues predominate over residues 280–289 (SKVQVNRRQK).

This sequence belongs to the SPC25 family. In terms of assembly, component of the NDC80 complex, which consists of NDC80, NUF2, SPC24 and SPC25.

The protein resides in the chromosome. It is found in the centromere. Its function is as follows. Acts as a component of the essential kinetochore-associated NDC80 complex, which is required for chromosome segregation and spindle checkpoint activity to ensure proper cell division. In Arabidopsis thaliana (Mouse-ear cress), this protein is Kinetochore protein SPC25 homolog.